Consider the following 458-residue polypeptide: Cysteine--tRNA ligase (458 aa).

Cys-27 contributes to the Zn(2+) binding site. The 'HIGH' region signature appears at 29–39 (MTVYDYMHIGH). Zn(2+) is bound by residues Cys-208, His-233, and Glu-237. A 'KMSKS' region motif is present at residues 265–269 (KMSKS). ATP is bound at residue Lys-268.

It belongs to the class-I aminoacyl-tRNA synthetase family. In terms of assembly, monomer. Requires Zn(2+) as cofactor.

Its subcellular location is the cytoplasm. It catalyses the reaction tRNA(Cys) + L-cysteine + ATP = L-cysteinyl-tRNA(Cys) + AMP + diphosphate. The protein is Cysteine--tRNA ligase of Coxiella burnetii (strain Dugway 5J108-111).